The chain runs to 420 residues: Glucose-1-phosphate adenylyltransferase (420 aa).

Residues Tyr-107, Gly-172, 187-188 (EK), and Ser-205 each bind alpha-D-glucose 1-phosphate.

The protein belongs to the bacterial/plant glucose-1-phosphate adenylyltransferase family. Homotetramer.

The catalysed reaction is alpha-D-glucose 1-phosphate + ATP + H(+) = ADP-alpha-D-glucose + diphosphate. The protein operates within glycan biosynthesis; glycogen biosynthesis. In terms of biological role, involved in the biosynthesis of ADP-glucose, a building block required for the elongation reactions to produce glycogen. Catalyzes the reaction between ATP and alpha-D-glucose 1-phosphate (G1P) to produce pyrophosphate and ADP-Glc. This is Glucose-1-phosphate adenylyltransferase from Rhodopseudomonas palustris (strain BisB18).